The following is a 202-amino-acid chain: Complement component C8 gamma chain (202 aa).

The first 23 residues, 1-23 (MVLRGRAVLLAVLLAAGSLGRWA), serve as a signal peptide directing secretion. Cys-96 and Cys-188 are oxidised to a cystine. Asn-173 is a glycosylation site (N-linked (GlcNAc...) asparagine).

The protein belongs to the calycin superfamily. Lipocalin family. Heterotrimer of 3 chains: alpha (C8A), beta (C8B) and gamma (C8G); the alpha and gamma chains are disulfide bonded. Component of the membrane attack complex (MAC), composed of complement C5b, C6, C7, C8A, C8B, C8G and multiple copies of the pore-forming subunit C9.

It localises to the secreted. It is found in the target cell membrane. With respect to regulation, membrane attack complex (MAC) assembly is inhibited by CD59, thereby protecting self-cells from damage during complement activation. MAC assembly is also inhibited by clusterin (CLU) chaperones that inhibit polymerization of C9. Component of the membrane attack complex (MAC), a multiprotein complex activated by the complement cascade, which inserts into a target cell membrane and forms a pore, leading to target cell membrane rupture and cell lysis. The MAC is initiated by proteolytic cleavage of C5 into complement C5b in response to the classical, alternative, lectin and GZMK complement pathways. The complement pathways consist in a cascade of proteins that leads to phagocytosis and breakdown of pathogens and signaling that strengthens the adaptive immune system. C8G, together with C8A and C8B, inserts into the target membrane, but does not form pores by itself. During MAC assembly, associates with C5b, C6 and C7 to form the C5b8 intermediate complex that inserts into the target membrane and traverses the bilayer increasing membrane rigidity. This Oryctolagus cuniculus (Rabbit) protein is Complement component C8 gamma chain (C8G).